Reading from the N-terminus, the 194-residue chain is GTP cyclohydrolase 1 (194 aa).

The Zn(2+) site is built by cysteine 83, histidine 86, and cysteine 155.

It belongs to the GTP cyclohydrolase I family. In terms of assembly, toroid-shaped homodecamer, composed of two pentamers of five dimers.

The catalysed reaction is GTP + H2O = 7,8-dihydroneopterin 3'-triphosphate + formate + H(+). It participates in cofactor biosynthesis; 7,8-dihydroneopterin triphosphate biosynthesis; 7,8-dihydroneopterin triphosphate from GTP: step 1/1. The chain is GTP cyclohydrolase 1 (folE) from Streptococcus pyogenes serotype M1.